The sequence spans 61 residues: Hepcidin (61 aa).

The disordered stretch occupies residues 1–24 (LQVLTEEVGSIDSPVGEHQQPGGE). A propeptide spanning residues 1–34 (LQVLTEEVGSIDSPVGEHQQPGGESMRLPEHFRF) is cleaved from the precursor. 4 disulfide bridges follow: Cys43–Cys59, Cys46–Cys49, Cys47–Xaa55, and Cys50–Cys58.

This sequence belongs to the hepcidin family.

It localises to the secreted. Seems to act as a signaling molecule involved in the maintenance of iron homeostasis. Seems to be required in conjunction with HFE to regulate both intestinal iron absorption and iron storage in macrophages. May also have antimicrobial activity. The sequence is that of Hepcidin (hamp) from Oncorhynchus mykiss (Rainbow trout).